The chain runs to 357 residues: N-acetyl-gamma-glutamyl-phosphate reductase (357 aa).

Residue Cys160 is part of the active site.

The protein belongs to the NAGSA dehydrogenase family. Type 1 subfamily.

It is found in the cytoplasm. The catalysed reaction is N-acetyl-L-glutamate 5-semialdehyde + phosphate + NADP(+) = N-acetyl-L-glutamyl 5-phosphate + NADPH + H(+). The protein operates within amino-acid biosynthesis; L-arginine biosynthesis; N(2)-acetyl-L-ornithine from L-glutamate: step 3/4. Its function is as follows. Catalyzes the NADPH-dependent reduction of N-acetyl-5-glutamyl phosphate to yield N-acetyl-L-glutamate 5-semialdehyde. The sequence is that of N-acetyl-gamma-glutamyl-phosphate reductase from Parasynechococcus marenigrum (strain WH8102).